Reading from the N-terminus, the 309-residue chain is Serine/threonine-protein phosphatase 2A catalytic subunit beta isoform (309 aa).

Positions 57, 59, 85, and 117 each coordinate Mn(2+). Histidine 118 acts as the Proton donor in catalysis. Residues histidine 167 and histidine 241 each contribute to the Mn(2+) site. Tyrosine 307 is modified (phosphotyrosine). Leucine 309 carries the post-translational modification Leucine methyl ester.

It belongs to the PPP phosphatase family. PP-1 subfamily. In terms of assembly, PP2A consists of a common heterodimeric core enzyme (composed of a 36 kDa catalytic subunit (subunit C) and a 65 kDa constant regulatory subunit (PR65) (subunit A)) that associates with a variety of regulatory subunits. Proteins that associate with the core dimer include three families of regulatory subunits B (the R2/B/PR55/B55, R3/B''/PR72/PR130/PR59 and R5/B'/B56 families), the 48 kDa variable regulatory subunit, viral proteins, and cell signaling molecules. Binds PPME1. May indirectly interact with SGO1, most probably through regulatory B56 subunits. Found in a complex with at least ARL2, PPP2CB, PPP2R1A, PPP2R2A, PPP2R5E and TBCD. Interacts with TBCD. Interacts with CTTNBP2NL. Interacts with PTPA. Part of the core of STRIPAK complexes composed of PP2A catalytic and scaffolding subunits, the striatins (PP2A regulatory subunits), the striatin-associated proteins MOB4, STRIP1 and STRIP2, PDCD10 and members of the STE20 kinases, such as STK24 and STK26. The cofactor is Mn(2+). In terms of processing, reversibly methyl esterified on Leu-309 by leucine carboxyl methyltransferase 1 (LCMT1) and protein phosphatase methylesterase 1 (PPME1). Carboxyl methylation influences the affinity of the catalytic subunit for the different regulatory subunits, thereby modulating the PP2A holoenzyme's substrate specificity, enzyme activity and cellular localization. Post-translationally, phosphorylation of either threonine (by autophosphorylation-activated protein kinase) or tyrosine results in inactivation of the phosphatase. Auto-dephosphorylation has been suggested as a mechanism for reactivation. May be monoubiquitinated by NOSIP.

Its subcellular location is the cytoplasm. The protein resides in the nucleus. It localises to the chromosome. It is found in the centromere. The protein localises to the cytoskeleton. Its subcellular location is the spindle pole. The catalysed reaction is O-phospho-L-seryl-[protein] + H2O = L-seryl-[protein] + phosphate. It catalyses the reaction O-phospho-L-threonyl-[protein] + H2O = L-threonyl-[protein] + phosphate. Catalytic subunit of protein phosphatase 2A (PP2A), a serine/threonine phosphatase involved in the regulation of a wide variety of enzymes, signal transduction pathways, and cellular events. PP2A can modulate the activity of phosphorylase B kinase, casein kinase 2, mitogen-stimulated S6 kinase, and MAP-2 kinase. Part of the striatin-interacting phosphatase and kinase (STRIPAK) complexes. STRIPAK complexes have critical roles in protein (de)phosphorylation and are regulators of multiple signaling pathways including Hippo, MAPK, nuclear receptor and cytoskeleton remodeling. Different types of STRIPAK complexes are involved in a variety of biological processes such as cell growth, differentiation, apoptosis, metabolism and immune regulation. The sequence is that of Serine/threonine-protein phosphatase 2A catalytic subunit beta isoform (PPP2CB) from Bos taurus (Bovine).